An 812-amino-acid chain; its full sequence is 5-methyltetrahydropteroyltriglutamate--homocysteine methyltransferase 3, chloroplastic (812 aa).

A chloroplast-targeting transit peptide spans 1 to 33 (MGQLALQRLQPLASLPRRPPSLPPPSSATPSLP). Residues 13–33 (ASLPRRPPSLPPPSSATPSLP) form a disordered region. Residues 17–27 (RRPPSLPPPSS) show a composition bias toward pro residues. Positions 66 and 164 each coordinate 5-methyltetrahydropteroyltri-L-glutamate. Positions 430–456 (MRQASRRSSPRVTNAAVQQDVDAVKKS) are disordered. L-homocysteine is bound by residues 485–487 (IGS) and E538. Residues 485 to 487 (IGS) and E538 contribute to the L-methionine site. 5-methyltetrahydropteroyltri-L-glutamate is bound by residues D543, Y566, 569–570 (RC), and W615. D653 is a binding site for L-homocysteine. Residue D653 participates in L-methionine binding. H695, C697, H706, D710, and E719 together coordinate Zn(2+). H749 acts as the Proton donor in catalysis. C781 serves as a coordination point for Zn(2+).

This sequence belongs to the vitamin-B12 independent methionine synthase family. Zn(2+) serves as cofactor. Expressed in seeds.

The protein resides in the plastid. Its subcellular location is the chloroplast. The enzyme catalyses 5-methyltetrahydropteroyltri-L-glutamate + L-homocysteine = tetrahydropteroyltri-L-glutamate + L-methionine. Its pathway is amino-acid biosynthesis; L-methionine biosynthesis via de novo pathway; L-methionine from L-homocysteine (MetE route): step 1/1. Its function is as follows. Catalyzes the transfer of a methyl group from 5-methyltetrahydrofolate to homocysteine resulting in methionine formation. The sequence is that of 5-methyltetrahydropteroyltriglutamate--homocysteine methyltransferase 3, chloroplastic (MS3) from Arabidopsis thaliana (Mouse-ear cress).